Reading from the N-terminus, the 248-residue chain is Tropomyosin alpha-4 chain (248 aa).

Residue Ala-2 is modified to N-acetylalanine. The stretch at 2 to 248 (AGLNSLEAVK…DQTLNELNCI (247 aa)) forms a coiled coil. A Phosphoserine modification is found at Ser-6. A disordered region spans residues 15-47 (QALQQQADEAEDRAQGLQRELDGERERREKAEG). A compositionally biased stretch (basic and acidic residues) spans 33–47 (RELDGERERREKAEG). Residues Lys-177 and Lys-215 each carry the N6-acetyllysine modification. At Thr-216 the chain carries Phosphothreonine.

Belongs to the tropomyosin family. As to quaternary structure, homodimer. Heterodimer of an alpha (TPM1, TPM3 or TPM4) and a beta (TPM2) chain. Detected in cardiac tissue and platelets, the form found in cardiac tissue is a higher molecular weight than the form found in platelets. Expressed at higher levels in the platelets of hypertensive patients with cardiac hypertrophy than in the platelets of hypertensive patients without cardiac hypertrophy (at protein level).

It is found in the cytoplasm. Its subcellular location is the cytoskeleton. Binds to actin filaments in muscle and non-muscle cells. Plays a central role, in association with the troponin complex, in the calcium dependent regulation of vertebrate striated muscle contraction. Smooth muscle contraction is regulated by interaction with caldesmon. In non-muscle cells is implicated in stabilizing cytoskeleton actin filaments. Binds calcium. Plays a role in platelet biogenesis. This Homo sapiens (Human) protein is Tropomyosin alpha-4 chain (TPM4).